A 633-amino-acid polypeptide reads, in one-letter code: MADQRMDISSTISDFMSPDPADLISSSLSTSGMDCNRKRKGSSTDYQLDGFPFEEGMDTDKDDQHGRLEYTDQQGRIKNAREAHSQIEKRRRDKMNSFIDELASLVPTCNAMSRKLDKLTVLRMAVQHMKTLRGATNPYTEANYKPAFLSDDELKHLILRAADGFLFVVGCDRGKILFVSESVFKILNYSQNDLIGQSLFDYLHPKDIAKVKEQLSSSDTAPRERLIDAKTGLPVKTDITPGPSRLCSGARRSFFCRMKCNRPSVKVEDKDFPSTCSKKKADRKSFCTIHSTGYLKSWPPTKMGLDEDNEPDNEGCNLSCLVAIGRLHPHVVPQPVNGEIRVKPTEYVSRHAIDGKFVFVDQRATAILAYLPQELLGTSCYEYFHQDDIGHLAECHRQVLQTREKITTNCYKFKIKDGSFITLRSRWFSFMNPWTKEVEYIVSTNTVVSTNVLDSGDAAFPQLAASPHSMDSVLQAGEGGPKRTHPTVPGIPGGTRAGAGKIGRMIAEEIMEIHRIRGSSPSSCGSSPLNITSTPPPDTSSPGGKKILNGGTPDISSAGLLSGQIQDNSGYPYSDNSSILGENSHIGIDMIDNDQGSSSPSNDEAAMAVIMSLLEADAGLGGPVDFSDLPWPL.

Positions 1-65 (MADQRMDISS…GMDTDKDDQH (65 aa)) are disordered. S17 carries the post-translational modification Phosphoserine; by GSK3-beta. Positions 24-33 (ISSSLSTSGM) are enriched in polar residues. The Nuclear localization signal motif lies at 36–41 (NRKRKG). A bHLH domain is found at 79–132 (NAREAHSQIEKRRRDKMNSFIDELASLVPTCNAMSRKLDKLTVLRMAVQHMKTL). S85 is modified (phosphoserine). S97 carries the post-translational modification Phosphoserine; by CK2. Positions 149-159 (LSDDELKHLIL) match the Nuclear export signal 1 motif. Residues 150 to 222 (SDDELKHLIL…EQLSSSDTAP (73 aa)) enclose the PAS 1 domain. A Glycyl lysine isopeptide (Lys-Gly) (interchain with G-Cter in SUMO2 and SUMO3) cross-link involves residue K259. K266 is covalently cross-linked (Glycyl lysine isopeptide (Lys-Gly) (interchain with G-Cter in SUMO)). In terms of domain architecture, PAS 2 spans 333 to 403 (PQPVNGEIRV…ECHRQVLQTR (71 aa)). The Nuclear export signal 2 signature appears at 368–376 (LAYLPQELL). Positions 408–451 (TNCYKFKIKDGSFITLRSRWFSFMNPWTKEVEYIVSTNTVVSTN) constitute a PAC domain. Disordered regions lie at residues 472-499 (SVLQAGEGGPKRTHPTVPGIPGGTRAGA) and 518-555 (GSSPSSCGSSPLNITSTPPPDTSSPGGKKILNGGTPDI). Residues 518 to 528 (GSSPSSCGSSP) are compositionally biased toward low complexity. K545 is subject to N6-acetyllysine.

In terms of assembly, component of the circadian clock oscillator which includes the CRY1/2 proteins, CLOCK or NPAS2, BMAL1 or BMAL2, CSNK1D and/or CSNK1E, TIMELESS and the PER1/2/3 proteins. Forms a heterodimer with CLOCK. The CLOCK-BMAL1 heterodimer is required for E-box-dependent transactivation, for CLOCK nuclear translocation and degradation, and, for phosphorylation of both CLOCK and BMAL1. Interacts with PER1, PER2, CRY1 and CRY2 and this interaction requires a translocation to the nucleus. Interaction of the CLOCK-BMAL1 heterodimer with PER or CRY inhibits transcription activation. Ubiquitinated, leading to its proteasomal degradation. Deubiquitinated by USP9X. In terms of processing, O-glycosylated; contains O-GlcNAc. O-glycosylation by OGT prevents protein degradation by inhibiting ubiquitination. It also stabilizes the CLOCK-BMAL1 heterodimer thereby increasing CLOCK-BMAL1-mediated transcription of genes in the negative loop of the circadian clock such as PER1/2/3 and CRY1/2. Post-translationally, acetylated on Lys-545 by CLOCK during the repression phase of the circadian cycle. Acetylation facilitates recruitment of CRY1 protein and initiates the repression phase of the circadian cycle. Acetylated at Lys-545 by KAT5 during the activation phase of the cycle, leading to recruitment of the positive transcription elongation factor b (P-TEFb) and BRD4, followed by productive elongation of circadian transcripts. Deacetylated by SIRT1, which may result in decreased protein stability. Phosphorylated upon dimerization with CLOCK. Phosphorylation enhances the transcriptional activity, alters the subcellular localization and decreases the stability of the CLOCK-BMAL1 heterodimer by promoting its degradation. Phosphorylation shows circadian variations in the liver with a peak between CT10 to CT14. Phosphorylation at Ser-97 by CK2 is essential for its nuclear localization, its interaction with CLOCK and controls CLOCK nuclear entry. Dephosphorylation at Ser-85 is important for dimerization with CLOCK and transcriptional activity. In terms of processing, sumoylated on Lys-266 upon dimerization with CLOCK. Predominantly conjugated to poly-SUMO2/3 rather than SUMO1 and the level of these conjugates undergo rhythmic variation, peaking at CT9-CT12. Sumoylation localizes it exclusively to the PML body and promotes its ubiquitination in the PML body, ubiquitin-dependent proteasomal degradation and the transcriptional activity of the CLOCK-BMAL1 heterodimer. Post-translationally, undergoes lysosome-mediated degradation in a time-dependent manner in the liver.

The protein localises to the nucleus. Its subcellular location is the cytoplasm. It is found in the PML body. In terms of biological role, transcriptional activator which forms a core component of the circadian clock. The circadian clock, an internal time-keeping system, regulates various physiological processes through the generation of approximately 24 hour circadian rhythms in gene expression, which are translated into rhythms in metabolism and behavior. It is derived from the Latin roots 'circa' (about) and 'diem' (day) and acts as an important regulator of a wide array of physiological functions including metabolism, sleep, body temperature, blood pressure, endocrine, immune, cardiovascular, and renal function. Consists of two major components: the central clock, residing in the suprachiasmatic nucleus (SCN) of the brain, and the peripheral clocks that are present in nearly every tissue and organ system. Both the central and peripheral clocks can be reset by environmental cues, also known as Zeitgebers (German for 'timegivers'). The predominant Zeitgeber for the central clock is light, which is sensed by retina and signals directly to the SCN. The central clock entrains the peripheral clocks through neuronal and hormonal signals, body temperature and feeding-related cues, aligning all clocks with the external light/dark cycle. Circadian rhythms allow an organism to achieve temporal homeostasis with its environment at the molecular level by regulating gene expression to create a peak of protein expression once every 24 hours to control when a particular physiological process is most active with respect to the solar day. Transcription and translation of core clock components (CLOCK, NPAS2, BMAL1, BMAL2, PER1, PER2, PER3, CRY1 and CRY2) plays a critical role in rhythm generation, whereas delays imposed by post-translational modifications (PTMs) are important for determining the period (tau) of the rhythms (tau refers to the period of a rhythm and is the length, in time, of one complete cycle). A diurnal rhythm is synchronized with the day/night cycle, while the ultradian and infradian rhythms have a period shorter and longer than 24 hours, respectively. Disruptions in the circadian rhythms contribute to the pathology of cardiovascular diseases, cancer, metabolic syndromes and aging. A transcription/translation feedback loop (TTFL) forms the core of the molecular circadian clock mechanism. Transcription factors, CLOCK or NPAS2 and BMAL1 or BMAL2, form the positive limb of the feedback loop, act in the form of a heterodimer and activate the transcription of core clock genes and clock-controlled genes (involved in key metabolic processes), harboring E-box elements (5'-CACGTG-3') within their promoters. The core clock genes: PER1/2/3 and CRY1/2 which are transcriptional repressors form the negative limb of the feedback loop and interact with the CLOCK|NPAS2-BMAL1|BMAL2 heterodimer inhibiting its activity and thereby negatively regulating their own expression. This heterodimer also activates nuclear receptors NR1D1/2 and RORA/B/G, which form a second feedback loop and which activate and repress BMAL1 transcription, respectively. The preferred binding motif for the CLOCK-BMAL1 heterodimer is 5'-CACGTGA-3', which contains a flanking adenine nucleotide at the 3-prime end of the canonical 6-nucleotide E-box sequence. CLOCK specifically binds to the half-site 5'-CAC-3', while BMAL1 binds to the half-site 5'-GTGA-3'. Essential for the rhythmic interaction of CLOCK with ASS1 and plays a critical role in positively regulating CLOCK-mediated acetylation of ASS1. Plays a role in protecting against lethal sepsis by limiting the expression of immune checkpoint protein CD274 in macrophages in a PKM2-dependent manner. This chain is Basic helix-loop-helix ARNT-like protein 1 (BMAL1), found in Tyto alba (Barn owl).